The primary structure comprises 221 residues: MEPLIHPLLDEATVSHLRASLLTDETSWQDGRKTAGYQAAEVKNNLQLKRYSKTAKENSQLVIEKLESDPLVKSFALPRHIHGVMFSRSGIGQGYGMHVDNAYMSSGRSDLSFTLFLSEPESYDGGALCIQTLQDSKQVKLPAGQLIIYPSTSLHAVETVTAGERLVCVGWIQSYISSNEDRTILFGLNAGARALLAEHGRSPELDLIFQAYTNLLRRLGS.

One can recognise a Fe2OG dioxygenase domain in the interval 80–174 (HIHGVMFSRS…RLVCVGWIQS (95 aa)). Residues His98, Asp100, and His155 each contribute to the Fe cation site. Arg165 provides a ligand contact to 2-oxoglutarate.

It depends on Fe(2+) as a cofactor. L-ascorbate serves as cofactor.

In Prochlorococcus marinus (strain MIT 9303), this protein is PKHD-type hydroxylase P9303_20491.